Reading from the N-terminus, the 283-residue chain is Cardiolipin synthase (CMP-forming) (283 aa).

Transmembrane regions (helical) follow at residues 83 to 103 (PFIG…LFAF), 155 to 175 (VSIA…ALFI), and 209 to 229 (LSKW…LLLL).

This sequence belongs to the CDP-alcohol phosphatidyltransferase class-I family. May be found in a large complex. The cofactor is Mg(2+).

The protein localises to the mitochondrion inner membrane. It catalyses the reaction a CDP-1,2-diacyl-sn-glycerol + a 1,2-diacyl-sn-glycero-3-phospho-(1'-sn-glycerol) = a cardiolipin + CMP + H(+). In terms of biological role, catalyzes the synthesis of cardiolipin (CL) (diphosphatidylglycerol) by specifically transferring a phosphatidyl group from CDP-diacylglycerol to phosphatidylglycerol (PG). CL is a key phospholipid in mitochondrial membranes and plays important roles in maintaining the functional integrity and dynamics of mitochondria under both optimal and stress conditions. This Saccharomyces cerevisiae (strain ATCC 204508 / S288c) (Baker's yeast) protein is Cardiolipin synthase (CMP-forming) (CRD1).